The primary structure comprises 379 residues: MDWQTERGQVLDSARRVVIKVGSAVLTSGNGLDVGVVDNLVAQIADLHGRGVDVVLVSSGAVSAGRAVLRRCCEIKGMPHKQAASAVGQSRLMHYYDEAFGRHGIISAQILLTKDDLRSRHRFLNARNTFAALMDWHAVPIVNENDTVAVRELEFGDNDSLASLLLNVVDADLFINLTSAGGVYADNPDTNPDARVMECIENVHGLNLDVMCGGKTAVGSGGMYSKLLAARRAAQLGVPTLILPGRKPDAMLRAFAGDEPGTWVRPEKKTVSARKFWLAYHADPTGSVVVDDGAVKALEAGKSLLPAGIIGVEGGFGRGALVRVTSAAGAVVAVGLSNYPAADLRRIMGHRTAELTAILGDNQYPEAIHRDNMLMDAVV.

Residue lysine 20 coordinates ATP. Positions 59, 146, and 158 each coordinate substrate. 220-226 (SGGMYSK) is a binding site for ATP. Residues 285–362 (TGSVVVDDGA…AELTAILGDN (78 aa)) enclose the PUA domain.

The protein belongs to the glutamate 5-kinase family.

Its subcellular location is the cytoplasm. The catalysed reaction is L-glutamate + ATP = L-glutamyl 5-phosphate + ADP. The protein operates within amino-acid biosynthesis; L-proline biosynthesis; L-glutamate 5-semialdehyde from L-glutamate: step 1/2. Catalyzes the transfer of a phosphate group to glutamate to form L-glutamate 5-phosphate. In Oleidesulfovibrio alaskensis (strain ATCC BAA-1058 / DSM 17464 / G20) (Desulfovibrio alaskensis), this protein is Glutamate 5-kinase.